The chain runs to 308 residues: Acetyl-coenzyme A carboxylase carboxyl transferase subunit alpha (308 aa).

In terms of domain architecture, CoA carboxyltransferase C-terminal spans 36–286; the sequence is ELEKEVSSVY…ESYFLKAFEE (251 aa).

Belongs to the AccA family. Acetyl-CoA carboxylase is a heterohexamer composed of biotin carboxyl carrier protein (AccB), biotin carboxylase (AccC) and two subunits each of ACCase subunit alpha (AccA) and ACCase subunit beta (AccD).

It is found in the cytoplasm. It carries out the reaction N(6)-carboxybiotinyl-L-lysyl-[protein] + acetyl-CoA = N(6)-biotinyl-L-lysyl-[protein] + malonyl-CoA. It participates in lipid metabolism; malonyl-CoA biosynthesis; malonyl-CoA from acetyl-CoA: step 1/1. Functionally, component of the acetyl coenzyme A carboxylase (ACC) complex. First, biotin carboxylase catalyzes the carboxylation of biotin on its carrier protein (BCCP) and then the CO(2) group is transferred by the carboxyltransferase to acetyl-CoA to form malonyl-CoA. The polypeptide is Acetyl-coenzyme A carboxylase carboxyl transferase subunit alpha (Helicobacter hepaticus (strain ATCC 51449 / 3B1)).